The sequence spans 204 residues: Guanylate kinase (204 aa).

Positions 3-181 (GTLYIVSAAS…AVSEMSAIFT (179 aa)) constitute a Guanylate kinase-like domain. 10–17 (AASGTGKS) is a binding site for ATP.

This sequence belongs to the guanylate kinase family.

The protein localises to the cytoplasm. The enzyme catalyses GMP + ATP = GDP + ADP. In terms of biological role, essential for recycling GMP and indirectly, cGMP. This is Guanylate kinase (gmk) from Xylella fastidiosa (strain 9a5c).